Reading from the N-terminus, the 398-residue chain is Cytohesin-1 (398 aa).

Met-1 is subject to N-acetylmethionine. The stretch at 10–67 (SDLTAEERQELENIRRRKQELLADIQRLKDEIAEVANEIENLGSTEERKNMQRNKQVA) forms a coiled coil. Positions 73-202 (FNMDPKKGIQ…IIMLNTSLHN (130 aa)) constitute an SEC7 domain. The PH domain maps to 260-377 (NPDREGWLLK…WIKCIKAAIS (118 aa)). A 1,2-diacyl-sn-glycero-3-phospho-(1D-myo-inositol-3,4,5-trisphosphate)-binding positions include 269–277 (KLGGGRVKT), Arg-281, Tyr-292, Arg-302, and Asn-351. Positions 388–396 (RKKKVSSTK) are C-terminal autoinhibitory region.

As to quaternary structure, interacts with TRIM23 and CYTIP. Interacts (via coiled-coil domain) with FRMD4A (via coiled-coil domain). Interacts with FRMD4B. Found in a complex with PARD3, CYTH1 and FRMD4A. Interacts (via N-terminal domain) with INAVA (via N-terminal domain). Ubiquitinated by SCF(FBXW11) E3 ubiquitin-protein ligase complex. Ubiquitination induces proteasomal degradation.

It localises to the cell membrane. The protein resides in the cytoplasm. Its subcellular location is the cytosol. The protein localises to the cell junction. It is found in the tight junction. It localises to the adherens junction. Its function is as follows. Promotes guanine-nucleotide exchange on ARF1, ARF5 and ARF6. Promotes the activation of ARF factors through replacement of GDP with GTP. Plays an important role in membrane trafficking, during junctional remodeling and epithelial polarization, through regulation of ARF6 activity. The chain is Cytohesin-1 (CYTH1) from Chlorocebus aethiops (Green monkey).